Consider the following 362-residue polypeptide: UDP-N-acetylglucosamine--N-acetylmuramyl-(pentapeptide) pyrophosphoryl-undecaprenol N-acetylglucosamine transferase (362 aa).

UDP-N-acetyl-alpha-D-glucosamine contacts are provided by residues 15 to 17, N127, R165, S191, I247, 266 to 271, and Q292; these read TGG and ALTVSE.

The protein belongs to the glycosyltransferase 28 family. MurG subfamily.

The protein localises to the cell inner membrane. The enzyme catalyses di-trans,octa-cis-undecaprenyl diphospho-N-acetyl-alpha-D-muramoyl-L-alanyl-D-glutamyl-meso-2,6-diaminopimeloyl-D-alanyl-D-alanine + UDP-N-acetyl-alpha-D-glucosamine = di-trans,octa-cis-undecaprenyl diphospho-[N-acetyl-alpha-D-glucosaminyl-(1-&gt;4)]-N-acetyl-alpha-D-muramoyl-L-alanyl-D-glutamyl-meso-2,6-diaminopimeloyl-D-alanyl-D-alanine + UDP + H(+). Its pathway is cell wall biogenesis; peptidoglycan biosynthesis. Functionally, cell wall formation. Catalyzes the transfer of a GlcNAc subunit on undecaprenyl-pyrophosphoryl-MurNAc-pentapeptide (lipid intermediate I) to form undecaprenyl-pyrophosphoryl-MurNAc-(pentapeptide)GlcNAc (lipid intermediate II). This Shewanella baltica (strain OS223) protein is UDP-N-acetylglucosamine--N-acetylmuramyl-(pentapeptide) pyrophosphoryl-undecaprenol N-acetylglucosamine transferase.